Reading from the N-terminus, the 224-residue chain is Biosynthetic peptidoglycan transglycosylase (224 aa).

The helical transmembrane segment at 12–32 (ILVVLAILPVFLLLVYSLPFV) threads the bilayer.

Belongs to the glycosyltransferase 51 family.

The protein resides in the cell inner membrane. The catalysed reaction is [GlcNAc-(1-&gt;4)-Mur2Ac(oyl-L-Ala-gamma-D-Glu-L-Lys-D-Ala-D-Ala)](n)-di-trans,octa-cis-undecaprenyl diphosphate + beta-D-GlcNAc-(1-&gt;4)-Mur2Ac(oyl-L-Ala-gamma-D-Glu-L-Lys-D-Ala-D-Ala)-di-trans,octa-cis-undecaprenyl diphosphate = [GlcNAc-(1-&gt;4)-Mur2Ac(oyl-L-Ala-gamma-D-Glu-L-Lys-D-Ala-D-Ala)](n+1)-di-trans,octa-cis-undecaprenyl diphosphate + di-trans,octa-cis-undecaprenyl diphosphate + H(+). Its pathway is cell wall biogenesis; peptidoglycan biosynthesis. In terms of biological role, peptidoglycan polymerase that catalyzes glycan chain elongation from lipid-linked precursors. The protein is Biosynthetic peptidoglycan transglycosylase of Brucella suis biovar 1 (strain 1330).